The sequence spans 517 residues: ATP synthase subunit alpha (517 aa).

174–181 is an ATP binding site; that stretch reads GDRQTGKT.

This sequence belongs to the ATPase alpha/beta chains family. F-type ATPases have 2 components, CF(1) - the catalytic core - and CF(0) - the membrane proton channel. CF(1) has five subunits: alpha(3), beta(3), gamma(1), delta(1), epsilon(1). CF(0) has three main subunits: a(1), b(2) and c(9-12). The alpha and beta chains form an alternating ring which encloses part of the gamma chain. CF(1) is attached to CF(0) by a central stalk formed by the gamma and epsilon chains, while a peripheral stalk is formed by the delta and b chains.

The protein localises to the cell inner membrane. The enzyme catalyses ATP + H2O + 4 H(+)(in) = ADP + phosphate + 5 H(+)(out). Produces ATP from ADP in the presence of a proton gradient across the membrane. The alpha chain is a regulatory subunit. This is ATP synthase subunit alpha from Delftia acidovorans (strain DSM 14801 / SPH-1).